Here is a 79-residue protein sequence, read N- to C-terminus: uncharacterized protein (79 aa).

A run of 2 helical transmembrane segments spans residues 18-38 (IWIINLKVIIKIIISEIIVLI) and 50-70 (GITFVKNEFIISSIFYFFFLF).

It is found in the host membrane. This is an uncharacterized protein from Spiroplasma virus SpV1-R8A2 B (SpV1).